We begin with the raw amino-acid sequence, 177 residues long: Ureidoglycolate lyase (177 aa).

This sequence belongs to the ureidoglycolate lyase family. As to quaternary structure, homodimer. The cofactor is Ni(2+).

It catalyses the reaction (S)-ureidoglycolate = urea + glyoxylate. It functions in the pathway nitrogen metabolism; (S)-allantoin degradation. In terms of biological role, catalyzes the catabolism of the allantoin degradation intermediate (S)-ureidoglycolate, generating urea and glyoxylate. Involved in the utilization of allantoin as nitrogen source. In Burkholderia cepacia (Pseudomonas cepacia), this protein is Ureidoglycolate lyase.